The sequence spans 364 residues: NAC transcription factor 56 (364 aa).

Positions 1 to 23 are disordered; sequence MESTDSSGGPPPPQPNLPPGFRF. Positions 9–18 are enriched in pro residues; that stretch reads GPPPPQPNLP. An NAC domain is found at 17 to 178; it reads LPPGFRFHPT…DWVLCRIYKK (162 aa). Residues 116-184 mediate DNA binding; the sequence is VGVKKALVFY…IYKKNNASRH (69 aa).

Stamen specific, in anthers from stage 8. Expressed in the outer integument, but seems not expressed in the embryo at the torpedo stage.

It localises to the nucleus. Transcription factor of the NAC family. Together with NAC018/NARS2, regulates embryogenesis by regulating the development and degeneration of ovule integuments, a process required for intertissue communication between the embryo and the maternal integument. This chain is NAC transcription factor 56, found in Arabidopsis thaliana (Mouse-ear cress).